The primary structure comprises 620 residues: PAN2-PAN3 deadenylation complex subunit PAN3 (620 aa).

The C3H1-type zinc finger occupies 7 to 36 (SAKGTLCKNILIYGYCKYENKGCAFSHRRN). 2 disordered regions span residues 39-73 (ANSG…QPST) and 95-168 (VFVP…QPGP). Composition is skewed to polar residues over residues 63–73 (NVNTPSFQPST) and 101–126 (TPAS…TVSN). A pseudokinase domain region spans residues 226-482 (QSYPGGPEIV…LESYIRKHLA (257 aa)). ATP-binding positions include arginine 274, 323-330 (DYYPNAST), and 380-381 (SK). The stretch at 483-521 (IRLLDVVDMLEDSNDYLESQLSTELENARLVRLMTKINF) forms a coiled coil. The interval 522-620 (IVDRPEWDNE…SVFRTITRGK (99 aa)) is knob domain.

The protein belongs to the protein kinase superfamily. PAN3 family. As to quaternary structure, homodimer. Forms a heterotrimer with a catalytic subunit PAN2 to form the poly(A)-nuclease (PAN) deadenylation complex. Interacts (via PAM-2 motif) with poly(A)-binding protein PAB1 (via PABC domain), conferring substrate specificity of the enzyme complex.

The protein localises to the cytoplasm. Functionally, regulatory subunit of the poly(A)-nuclease (PAN) deadenylation complex, one of two cytoplasmic mRNA deadenylases involved in mRNA turnover. PAN specifically shortens poly(A) tails of RNA and the activity is stimulated by poly(A)-binding protein PAB1. PAN deadenylation is followed by rapid degradation of the shortened mRNA tails by the CCR4-NOT complex. Deadenylated mRNAs are then degraded by two alternative mechanisms, namely exosome-mediated 3'-5' exonucleolytic degradation, or deadenylation-dependent mRNA decaping and subsequent 5'-3' exonucleolytic degradation by XRN1. May also be involved in post-transcriptional maturation of mRNA poly(A) tails. PAN3 acts as a positive regulator for PAN activity, recruiting the catalytic subunit PAN2 to mRNA via its interaction with RNA and with PAB1. In Meyerozyma guilliermondii (strain ATCC 6260 / CBS 566 / DSM 6381 / JCM 1539 / NBRC 10279 / NRRL Y-324) (Yeast), this protein is PAN2-PAN3 deadenylation complex subunit PAN3.